The sequence spans 747 residues: Elongation factor G, mitochondrial (747 aa).

A mitochondrion-targeting transit peptide spans 1–32 (MTLITRVLNSNLPLRLSALKTVRQLQCGYSSH). The tr-type G domain occupies 42-319 (ERIRNIGISA…AIIDYLPNPG (278 aa)). GTP is bound by residues 51–58 (AHIDSGKT), 118–122 (DTPGH), and 172–175 (NKLD).

Belongs to the TRAFAC class translation factor GTPase superfamily. Classic translation factor GTPase family. EF-G/EF-2 subfamily.

Its subcellular location is the mitochondrion. Its pathway is protein biosynthesis; polypeptide chain elongation. Its function is as follows. Mitochondrial GTPase that catalyzes the GTP-dependent ribosomal translocation step during translation elongation. During this step, the ribosome changes from the pre-translocational (PRE) to the post-translocational (POST) state as the newly formed A-site-bound peptidyl-tRNA and P-site-bound deacylated tRNA move to the P and E sites, respectively. Catalyzes the coordinated movement of the two tRNA molecules, the mRNA and conformational changes in the ribosome. Essential during development as it acts as a retrograde signal from mitochondria to the nucleus to slow down cell proliferation if mitochondrial energy output is low. This Drosophila virilis (Fruit fly) protein is Elongation factor G, mitochondrial.